A 1337-amino-acid chain; its full sequence is Partitioning defective 3 homolog (1337 aa).

Residue Ser-25 is modified to Phosphoserine. Disordered regions lie at residues 81 to 109 (EQDP…SELG) and 143 to 263 (SSDP…LENM). Thr-91 carries the post-translational modification Phosphothreonine. Residues 91-100 (TSASSTGTQS) show a composition bias toward low complexity. Polar residues-rich tracts occupy residues 150–163 (GLST…FSSE) and 171–188 (TRWS…TGSP). Phosphoserine occurs at positions 156 and 174. Residues 190–203 (TCDRKKDENYRSLP) are compositionally biased toward basic and acidic residues. The span at 207-224 (SSWSNQFQRDNARSSLSA) shows a compositional bias: polar residues. A PDZ 1 domain is found at 271–359 (MVKLVQVPND…ARVIWFHVVP (89 aa)). Position 383 is a phosphoserine (Ser-383). Positions 397-441 (NAPQALPRAPRLSQPPEQLDAHPRLPHSAHASTKPPTAPALAPPN) are disordered. PDZ domains lie at 461–546 (NIQL…LVFR) and 590–677 (EVPL…GMIQ). Tyr-489 is subject to Phosphotyrosine. 6 positions are modified to phosphoserine: Ser-692, Ser-695, Ser-715, Ser-728, Ser-809, and Ser-827. The tract at residues 712–936 (RRISHSLYSG…AAIDKSYDKP (225 aa)) is interaction with PRKCI and PRKCZ. Lys-834 is modified (N6-acetyllysine). At Ser-837 the chain carries Phosphoserine. Lys-851 is modified (N6-acetyllysine). A phosphoserine mark is found at Ser-852 and Ser-873. Disordered stretches follow at residues 866 to 888 (VDDQ…KKSS), 932 to 1015 (SYDK…AKKG), 1028 to 1055 (KHRK…DRVR), 1110 to 1271 (LNAR…LGGH), and 1284 to 1337 (LLRQ…PFYS). The residue at position 885 (Lys-885) is an N6-acetyllysine. The interval 935–1337 (KPMVDDDDEG…TPEKGRPFYS (403 aa)) is interaction with FRMD4A. The segment covering 939 to 953 (DDDDEGMETLEEDTE) has biased composition (acidic residues). The residue at position 962 (Ser-962) is a Phosphoserine; by AURKA. 2 positions are modified to phosphoserine: Ser-971 and Ser-973. 2 stretches are compositionally biased toward basic and acidic residues: residues 981-1009 (DPEK…EKDK) and 1030-1043 (RKDD…RIKI). Ser-1046 is modified (phosphoserine). Residues 1050–1082 (EEDRVRMKEEQERIQAKTREFRERQARERDYAE) are a coiled coil. Residues 1138 to 1147 (PGDSNRSTPS) are compositionally biased toward polar residues. A compositionally biased stretch (basic and acidic residues) spans 1148–1175 (NHDRIQRLRQEFQQAKQDEDVEDRRRTY). Coiled-coil stretches lie at residues 1149-1172 (HDRI…EDRR), 1199-1222 (VQVQ…YSSL), and 1278-1299 (MLET…LKKQ). Over residues 1180-1203 (SWSSSRPASQSGRHSVSVEVQVQR) the composition is skewed to low complexity. A compositionally biased stretch (polar residues) spans 1219–1240 (YSSLPRQSRKNASSVSQDSWEQ). Residues 1284-1296 (LLRQEQRRKEQQL) are compositionally biased toward basic and acidic residues. Residues 1318-1327 (SQVARLNRLQ) show a composition bias toward polar residues. The segment covering 1328–1337 (TPEKGRPFYS) has biased composition (basic and acidic residues). Lys-1331 bears the N6-acetyllysine mark.

This sequence belongs to the PAR3 family. As to quaternary structure, component of a complex whose core is composed of ARHGAP17, AMOT, PALS1, PATJ and PARD3/PAR3. Interacts (via PDZ 1 domain) with PARD6A, PARD6B and F11R/JAM1. Interacts with AURKA, AURKB and SIRT2. Interacts with PRKCI. Interacts with PRKCZ. Part of a complex with PARD6A or PARD6B, PRKCI or PRKCZ and CDC42 or RAC1. Interacts with LIMK2 and CDH5. Component of the Par polarity complex, composed of at least phosphorylated PRKCZ, PARD3 and TIAM1. Directly interacts with TIAM1 and TIAM2. Interacts with ECT2 and FBF1. Interacts (via PDZ 3 domain) with PTEN (via C-terminus). Interacts (via coiled-coil domain) with FRMD4A. Found in a complex with PARD3, CYTH1 and FRMD4A. Interacts with SAPCD2. Interacts with PRKCA. Interacts with PRKCZ. In terms of processing, acetylated. Deacetylated by SIRT2, thereby inhibiting Schwann cell peripheral myelination. Phosphorylation at Ser-827 by PRKCZ and PRKCI occurs at the most apical tip of epithelial cell-cell contacts during the initial phase of tight junction formation and may promote dissociation of the complex with PARD6. EGF-induced Tyr-1127 phosphorylation mediates dissociation from LIMK2. Phosphorylation by AURKA at Ser-962 is required for the normal establishment of neuronal polarity. As to expression, isoform 1 is predominantly expressed in lung, glandular stomach, prostate, ovary and uterus. Isoform 1 is also expressed in brain, with a high expression in the cortex, hippocampus and in the striatum. Isoform 2 is predominantly expressed in intestinal epithelial cells, kidney and prostate.

It localises to the cytoplasm. The protein resides in the endomembrane system. The protein localises to the cell junction. Its subcellular location is the tight junction. It is found in the adherens junction. It localises to the cell cortex. The protein resides in the cytoskeleton. The protein localises to the cell membrane. Adapter protein involved in asymmetrical cell division and cell polarization processes. Seems to play a central role in the formation of epithelial tight junctions. Association with PARD6B may prevent the interaction of PARD3 with F11R/JAM1, thereby preventing tight junction assembly. The PARD6-PARD3 complex links GTP-bound Rho small GTPases to atypical protein kinase C proteins. Required for establishment of neuronal polarity and normal axon formation in cultured hippocampal neurons. Involved in Schwann cell peripheral myelination. Targets the phosphatase PTEN to cell junctions. In Rattus norvegicus (Rat), this protein is Partitioning defective 3 homolog (Pard3).